We begin with the raw amino-acid sequence, 252 residues long: UPF0736 protein OB1207 (252 aa).

The protein belongs to the UPF0736 family.

In Oceanobacillus iheyensis (strain DSM 14371 / CIP 107618 / JCM 11309 / KCTC 3954 / HTE831), this protein is UPF0736 protein OB1207.